Here is a 348-residue protein sequence, read N- to C-terminus: Phenylalanine--tRNA ligase alpha subunit (348 aa).

Glu-262 serves as a coordination point for Mg(2+).

The protein belongs to the class-II aminoacyl-tRNA synthetase family. Phe-tRNA synthetase alpha subunit type 1 subfamily. In terms of assembly, tetramer of two alpha and two beta subunits. Mg(2+) serves as cofactor.

It is found in the cytoplasm. The catalysed reaction is tRNA(Phe) + L-phenylalanine + ATP = L-phenylalanyl-tRNA(Phe) + AMP + diphosphate + H(+). The chain is Phenylalanine--tRNA ligase alpha subunit from Streptococcus pneumoniae (strain JJA).